Reading from the N-terminus, the 189-residue chain is Group XIIA secretory phospholipase A2 (189 aa).

An N-terminal signal peptide occupies residues 1–22; that stretch reads MALLSRPALTLLLLLMAAVVRC. Ca(2+) contacts are provided by glycine 88, proline 90, and phenylalanine 92. Histidine 110 is a catalytic residue. Aspartate 111 is a Ca(2+) binding site. Aspartate 125 is a catalytic residue.

Ca(2+) is required as a cofactor. As to expression, abundantly expressed in heart, skeletal muscle, kidney, liver and pancreas.

It localises to the secreted. The protein resides in the cytoplasm. It catalyses the reaction a 1,2-diacyl-sn-glycero-3-phosphocholine + H2O = a 1-acyl-sn-glycero-3-phosphocholine + a fatty acid + H(+). Its function is as follows. PA2 catalyzes the calcium-dependent hydrolysis of the 2-acyl groups in 3-sn-phosphoglycerides. Does not exhibit detectable activity toward sn-2-arachidonoyl- or linoleoyl-phosphatidylcholine or -phosphatidylethanolamine. The sequence is that of Group XIIA secretory phospholipase A2 (PLA2G12A) from Homo sapiens (Human).